We begin with the raw amino-acid sequence, 313 residues long: 4-diphosphocytidyl-2-C-methyl-D-erythritol kinase (313 aa).

The active site involves Lys10. 95-105 (PVTAGLGGGSS) contributes to the ATP binding site. Residue Asp136 is part of the active site. Positions 289–313 (HPRVSPWRSPRSASSPSTRRSSRPT) are disordered. Residues 292–307 (VSPWRSPRSASSPSTR) show a composition bias toward low complexity.

It belongs to the GHMP kinase family. IspE subfamily.

It catalyses the reaction 4-CDP-2-C-methyl-D-erythritol + ATP = 4-CDP-2-C-methyl-D-erythritol 2-phosphate + ADP + H(+). The protein operates within isoprenoid biosynthesis; isopentenyl diphosphate biosynthesis via DXP pathway; isopentenyl diphosphate from 1-deoxy-D-xylulose 5-phosphate: step 3/6. Its function is as follows. Catalyzes the phosphorylation of the position 2 hydroxy group of 4-diphosphocytidyl-2C-methyl-D-erythritol. The polypeptide is 4-diphosphocytidyl-2-C-methyl-D-erythritol kinase (Anaeromyxobacter dehalogenans (strain 2CP-C)).